The primary structure comprises 174 residues: Protein GrpE (174 aa).

Positions 1–35 (MAQDIKNEEVEEVQEEEVVETAEETTPEKSELDLA) are disordered. Positions 9-25 (EVEEVQEEEVVETAEET) are enriched in acidic residues. Residues 26–35 (TPEKSELDLA) are compositionally biased toward basic and acidic residues.

The protein belongs to the GrpE family. In terms of assembly, homodimer.

It is found in the cytoplasm. In terms of biological role, participates actively in the response to hyperosmotic and heat shock by preventing the aggregation of stress-denatured proteins, in association with DnaK and GrpE. It is the nucleotide exchange factor for DnaK and may function as a thermosensor. Unfolded proteins bind initially to DnaJ; upon interaction with the DnaJ-bound protein, DnaK hydrolyzes its bound ATP, resulting in the formation of a stable complex. GrpE releases ADP from DnaK; ATP binding to DnaK triggers the release of the substrate protein, thus completing the reaction cycle. Several rounds of ATP-dependent interactions between DnaJ, DnaK and GrpE are required for fully efficient folding. In Streptococcus pneumoniae (strain ATCC 700669 / Spain 23F-1), this protein is Protein GrpE.